The primary structure comprises 698 residues: Colicin V secretion/processing ATP-binding protein CvaB (698 aa).

Residues 26-145 (QTETAECGLA…RYFTGVALEV (120 aa)) form the Peptidase C39 domain. Residue cysteine 32 is part of the active site. The next 7 membrane-spanning stretches (helical) occupy residues 33-53 (GLACLAMICGHFGKNIDLIYL), 92-112 (VLKTPCILHWDFSHFVVLVSV), 176-196 (LAKIFCLSVVIEAINLLMPVG), 211-231 (GLLTLISAALMFFILLKAATS), 289-311 (TSVIGFIMDSIMVVGVCVMMLLY), 315-334 (LTWIVLCFTTIYIFIRLVTY), and 412-432 (IVILWLGAGLVIDNQMTIGMF). Residues 176–458 (LAKIFCLSVV…LTSFLLQLRI (283 aa)) form the ABC transmembrane type-1 domain. In terms of domain architecture, ABC transporter spans 492–698 (LETNGLSYRY…LRTVDRVISI (207 aa)). 526-533 (GASGAGKT) provides a ligand contact to ATP.

It belongs to the ABC transporter superfamily. Colicin V exporter (TC 3.A.1.110.2) family.

Its subcellular location is the cell membrane. Its function is as follows. Involved, in conjunction with CvaA, in the secretion of colicin V. The chain is Colicin V secretion/processing ATP-binding protein CvaB (cvaB) from Escherichia coli.